Reading from the N-terminus, the 422-residue chain is GTPase Obg (422 aa).

Positions Met1–Ile158 constitute an Obg domain. One can recognise an OBG-type G domain in the interval Ala159–Ala330. Residues Gly165–Ser172, Phe190–Val194, Asp212–Gly215, Asn282–Asp285, and Ser311–Ala313 contribute to the GTP site. Mg(2+)-binding residues include Ser172 and Thr192. An OCT domain is found at Val344–Glu422.

Belongs to the TRAFAC class OBG-HflX-like GTPase superfamily. OBG GTPase family. In terms of assembly, monomer. It depends on Mg(2+) as a cofactor.

The protein localises to the cytoplasm. An essential GTPase which binds GTP, GDP and possibly (p)ppGpp with moderate affinity, with high nucleotide exchange rates and a fairly low GTP hydrolysis rate. Plays a role in control of the cell cycle, stress response, ribosome biogenesis and in those bacteria that undergo differentiation, in morphogenesis control. This Desulforamulus reducens (strain ATCC BAA-1160 / DSM 100696 / MI-1) (Desulfotomaculum reducens) protein is GTPase Obg.